An 850-amino-acid chain; its full sequence is Probable beta-glucosidase J (850 aa).

N43 and N52 each carry an N-linked (GlcNAc...) asparagine glycan. D254 is an active-site residue. A PA14 domain is found at 423 to 583 (TGERGYTFRV…DAETAIKQAV (161 aa)). The N-linked (GlcNAc...) asparagine glycan is linked to N508.

Belongs to the glycosyl hydrolase 3 family.

The protein resides in the secreted. It catalyses the reaction Hydrolysis of terminal, non-reducing beta-D-glucosyl residues with release of beta-D-glucose.. It functions in the pathway glycan metabolism; cellulose degradation. Functionally, beta-glucosidases are one of a number of cellulolytic enzymes involved in the degradation of cellulosic biomass. Catalyzes the last step releasing glucose from the inhibitory cellobiose. The sequence is that of Probable beta-glucosidase J (bglJ) from Emericella nidulans (strain FGSC A4 / ATCC 38163 / CBS 112.46 / NRRL 194 / M139) (Aspergillus nidulans).